A 383-amino-acid chain; its full sequence is Chitinase-3-like protein 1 (383 aa).

The signal sequence occupies residues 1–21 (MGLRVAQTGFVALVLLQSCAA). Positions 22 to 383 (YKLVCYYTSW…SAIKDVLAAA (362 aa)) constitute a GH18 domain. A disulfide bridge links Cys26 with Cys51. Asn60 carries N-linked (GlcNAc...) asparagine glycosylation. Residues 70–71 (EW), 97–100 (GGWN), Tyr141, 204–207 (LTYD), and Arg263 each bind chitin. A disulfide bridge connects residues Cys300 and Cys364. The tract at residues 324 to 338 (QWVGYDDQESVKNKA) is important for AKT1 activation and IL8 production. Trp352 is a binding site for chitin.

This sequence belongs to the glycosyl hydrolase 18 family. Monomer. As to expression, detected in smooth muscle cells in atherosclerotic plaques. Detected in regions of vascular occlusion in the aorta.

Its subcellular location is the secreted. It localises to the extracellular space. It is found in the cytoplasm. The protein localises to the perinuclear region. The protein resides in the endoplasmic reticulum. In terms of biological role, carbohydrate-binding lectin with a preference for chitin. Has no chitinase activity. May play a role in tissue remodeling and in the capacity of cells to respond to and cope with changes in their environment. Plays a role in T-helper cell type 2 (Th2) inflammatory response and IL-13-induced inflammation, regulating allergen sensitization, inflammatory cell apoptosis, dendritic cell accumulation and M2 macrophage differentiation. Facilitates invasion of pathogenic enteric bacteria into colonic mucosa and lymphoid organs. Mediates activation of AKT1 signaling pathway and subsequent IL8 production in colonic epithelial cells. Regulates antibacterial responses in lung by contributing to macrophage bacterial killing, controlling bacterial dissemination and augmenting host tolerance. Also regulates hyperoxia-induced injury, inflammation and epithelial apoptosis in lung. Stimulates migration and adhesion of cultured vascular smooth muscle cells. This is Chitinase-3-like protein 1 (CHI3L1) from Sus scrofa (Pig).